The primary structure comprises 35 residues: Bacteriocin lactococcin-G subunit beta (35 aa).

Bacteriocin activity requires interaction of alpha and beta peptides in a molar ratio of 7:1 or 8:1 respectively.

In terms of biological role, kills Lactococci. This chain is Bacteriocin lactococcin-G subunit beta, found in Lactococcus lactis subsp. lactis (Streptococcus lactis).